Consider the following 177-residue polypeptide: Disulfide bond formation protein B (177 aa).

Residues 1–14 (MLIFFKNLSMKRST) are Cytoplasmic-facing. The chain crosses the membrane as a helical span at residues 15–31 (WILLFISALVLESTALY). At 32–49 (FQHGMGLNPCVMCIYERV) the chain is on the periplasmic side. Cysteines 41 and 44 form a disulfide. The helical transmembrane segment at 50 to 65 (AILGILFSGLIGCIAP) threads the bilayer. The Cytoplasmic portion of the chain corresponds to 66–72 (KWLVLRI). A helical transmembrane segment spans residues 73–90 (LALLIGLGSAVKGLLLAI). Topologically, residues 91–145 (KHLDYQINVYPWNQCAMVPDFPQTLPLDKWFPNIFMPSGSCSDITWSFLGFSMVQ) are periplasmic. A disulfide bridge links cysteine 105 with cysteine 131. Residues 146–164 (WIIVIFACYFLFFIILSIS) traverse the membrane as a helical segment. Residues 165 to 177 (QFKKVRKNRMLFR) lie on the Cytoplasmic side of the membrane.

It belongs to the DsbB family.

Its subcellular location is the cell inner membrane. Required for disulfide bond formation in some periplasmic proteins. Acts by oxidizing the DsbA protein. The protein is Disulfide bond formation protein B of Histophilus somni (strain 129Pt) (Haemophilus somnus).